We begin with the raw amino-acid sequence, 263 residues long: Bradykinin-potentiating and C-type natriuretic peptides (263 aa).

The N-terminal stretch at 1-23 (MFVSRLAASGLLLLALMALSLDG) is a signal peptide. The propeptide occupies 24-30 (KPVQQWS). Pyrrolidone carboxylic acid is present on Q31. Positions 42-48 (LVVQQWS) are excised as a propeptide. Q49 carries the post-translational modification Pyrrolidone carboxylic acid. A propeptide spanning residues 60–66 (LVVQQWS) is cleaved from the precursor. A Pyrrolidone carboxylic acid modification is found at Q67. Residues 78 to 84 (LVVQQWS) constitute a propeptide that is removed on maturation. Q85 is modified (pyrrolidone carboxylic acid). Positions 89-95 (PRPKIPP) are angiotensin-converting enzyme active site binding. The propeptide occupies 96–102 (LVVQQWS). Q103 is subject to Pyrrolidone carboxylic acid. The interval 107-113 (PRPKIPP) is angiotensin-converting enzyme active site binding. A propeptide spanning residues 114-116 (LVV) is cleaved from the precursor. At Q117 the chain carries Pyrrolidone carboxylic acid. Residues 128 to 130 (LLL) constitute a propeptide that is removed on maturation. The residue at position 131 (Q131) is a Pyrrolidone carboxylic acid. The propeptide occupies 137–241 (AGGTTALREE…ARRLKGLVKK (105 aa)). Disordered regions lie at residues 152–171 (EAAS…GSKA) and 177–205 (RLSK…GKQA). A compositionally biased stretch (low complexity) spans 181–192 (SKGASATSASAS). The segment covering 194–204 (PMRDLRTDGKQ) has biased composition (basic and acidic residues). C247 and C263 are oxidised to a cystine.

It in the N-terminal section; belongs to the bradykinin-potentiating peptide family. The protein in the C-terminal section; belongs to the natriuretic peptide family. As to expression, expressed by the venom gland.

Its subcellular location is the secreted. In terms of biological role, inhibits the rabbit lung angiotensin-converting enzyme (ACE) (IC(50)=15 uM). Contracts the rat gastric fundus smooth muscle in a rapid and transient manner. Functionally, causes no contraction of the rat gastric fundus smooth muscle even at high concentrations. Causes very weak contraction of the isolated guinea pig ileum. Causes weak contraction on rat uterus. Its function is as follows. Inhibits the activity of the angiotensin-converting enzyme (ACE) by a preferential interaction with its C-domain (Ki=30 nM, IC(50)=1.1 uM). It binds ACE in a zinc-independent manner. Also potentiates the hypotensive effects of bradykinin. Causes high contraction of the isolated guinea pig ileum and weak contraction on rat uterus. Inhibits the activity of the angiotensin-converting enzyme (ACE) by interacting with the same potency to its C- and N-domains. Inhibits the rabbit lung angiotensin-converting enzyme (ACE) (IC(50)=7.1 uM). Causes weak contraction of the isolated guinea pig ileum. Causes weak contraction on rat uterus. In terms of biological role, inhibits the rabbit lung angiotensin-converting enzyme (ACE) (IC(50)=46 uM). Synthetic Leu3-blomhotin contracts the rat gastric fundus smooth muscle in a rapid and transient manner. Causes moderate contraction of the isolated guinea pig ileum. Causes weak contraction on rat uterus. Functionally, causes weak contraction of the isolated guinea pig ileum. Causes about 50-fold more potentiating activity on rat uterus than on guinea pig ileum. Its function is as follows. Synthetic peptide potentiates the bradykinin in vivo. Synthetic peptide does not show any bradykinin-potentiating effects. In terms of biological role, has a vasorelaxant activity in rat aortic strips and a diuretic potency in anesthetized rats. May act by activating natriuretic receptors (NPR1 and/or NPR2). The sequence is that of Bradykinin-potentiating and C-type natriuretic peptides from Gloydius blomhoffii (Mamushi).